The following is a 294-amino-acid chain: Nucleophosmin (294 aa).

N-acetylmethionine is present on methionine 1. The interval 1 to 117 (MEDSMDMDMS…PVHISGQHLV (117 aa)) is necessary for interaction with APEX1. Residues 1-187 (MEDSMDMDMS…DDDDDFDEEV (187 aa)) form a required for interaction with SENP3 region. At serine 4 the chain carries Phosphoserine; by PLK1 and PLK2. The residue at position 10 (serine 10) is a Phosphoserine. Lysine 32 carries the post-translational modification N6-acetyllysine; alternate. A Glycyl lysine isopeptide (Lys-Gly) (interchain with G-Cter in SUMO1); alternate cross-link involves residue lysine 32. Lysine 32 is covalently cross-linked (Glycyl lysine isopeptide (Lys-Gly) (interchain with G-Cter in SUMO2); alternate). Serine 43 bears the Phosphoserine mark. A Phosphotyrosine modification is found at tyrosine 67. Serine 70 is modified (phosphoserine). Phosphothreonine is present on residues threonine 75 and threonine 95. A compositionally biased stretch (acidic residues) spans 121 to 132 (EDAESEEEEEEE). Residues 121-249 (EDAESEEEEE…GPSSVEDIKA (129 aa)) are disordered. At serine 125 the chain carries Phosphoserine; by CDK2. Phosphoserine occurs at positions 137 and 139. Lysine 141 is covalently cross-linked (Glycyl lysine isopeptide (Lys-Gly) (interchain with G-Cter in SUMO2)). An N6-acetyllysine; alternate modification is found at lysine 150. A Glycyl lysine isopeptide (Lys-Gly) (interchain with G-Cter in SUMO2); alternate cross-link involves residue lysine 150. Residues 152–157 (PQKKVK) carry the Nuclear localization signal motif. An N6-acetyllysine modification is found at lysine 154. Over residues 161–188 (DEDEDDDDDDDDDDDEDDDDDDFDEEVE) the composition is skewed to acidic residues. Residues 188-216 (EEKAPVKKSVRDTPAKNAQKSNQNGKDSK) are interaction with NOP2. Residues 189-201 (EKAPVKKSVRDTP) are compositionally biased toward basic and acidic residues. Residues 192 to 198 (PVKKSVR) carry the Nuclear localization signal motif. Phosphothreonine; by CDK1 and CDK2 is present on threonine 200. Polar residues predominate over residues 203 to 222 (KNAQKSNQNGKDSKPSTPRS). At serine 208 the chain carries ADP-ribosylserine. An N6-acetyllysine modification is found at lysine 213. Lysine 216 participates in a covalent cross-link: Glycyl lysine isopeptide (Lys-Gly) (interchain with G-Cter in SUMO2). Residue threonine 219 is modified to Phosphothreonine; by CDK1. A compositionally biased stretch (basic and acidic residues) spans 223 to 235 (KGQESFKKQEKTP). Residue serine 227 is modified to Phosphoserine. Lysine 229 bears the N6-acetyllysine mark. Lysine 230 is modified (N6-acetyllysine; alternate). Lysine 230 participates in a covalent cross-link: Glycyl lysine isopeptide (Lys-Gly) (interchain with G-Cter in SUMO); alternate. Phosphothreonine is present on residues threonine 234 and threonine 237. Serine 242 and serine 243 each carry phosphoserine. Residues 243-294 (SVEDIKAKMQASIEKGGSLPKVEAKFINYVKNCFRMTDQEAIQDLWQWRKSL) form a required for nucleolar localization region. Lysine 248 is covalently cross-linked (Glycyl lysine isopeptide (Lys-Gly) (interchain with G-Cter in SUMO1); alternate). Residues lysine 248 and lysine 250 each participate in a glycyl lysine isopeptide (Lys-Gly) (interchain with G-Cter in SUMO2); alternate cross-link. At lysine 250 the chain carries N6-acetyllysine; alternate. A Phosphoserine modification is found at serine 254. Lysine 257 is modified (N6-acetyllysine; alternate). Lysine 257 is covalently cross-linked (Glycyl lysine isopeptide (Lys-Gly) (interchain with G-Cter in SUMO1); alternate). Lysine 257 participates in a covalent cross-link: Glycyl lysine isopeptide (Lys-Gly) (interchain with G-Cter in SUMO2); alternate. Serine 260 is subject to Phosphoserine. Residues lysine 263, lysine 267, and lysine 273 each participate in a glycyl lysine isopeptide (Lys-Gly) (interchain with G-Cter in SUMO2); alternate cross-link. Lysine 263 is covalently cross-linked (Glycyl lysine isopeptide (Lys-Gly) (interchain with G-Cter in SUMO); alternate). 2 positions are modified to N6-acetyllysine; alternate: lysine 267 and lysine 273. Lysine 267 is covalently cross-linked (Glycyl lysine isopeptide (Lys-Gly) (interchain with G-Cter in SUMO1); alternate). The residue at position 267 (lysine 267) is an N6-succinyllysine; alternate. At threonine 279 the chain carries Phosphothreonine. Lysine 292 is modified (N6-acetyllysine).

It belongs to the nucleoplasmin family. As to quaternary structure, decamer formed by two pentameric rings associated in a head-to-head fashion. Disulfide-linked dimers under certain conditions. The SWAP complex consists of NPM1, NCL, PARP1 and SWAP70. Interacts with NSUN2 and SENP3. Interacts with the methylated form of RPS10. Interacts (via N-terminal domain) with APEX1; the interaction is RNA-dependent and decreases in hydrogen peroxide-damaged cells. Interacts with isoform 1 of NEK2. Interacts with ROCK2 and BRCA2. Interacts with RPGR. Interacts with CENPW. Interacts with EIF2AK2/PKR. Interacts with CEBPA (isoform 4). Interacts with DDX31; this interaction prevents interaction between NPM1 and HDM2. Interacts with MYC; competitive with NOP53. Interacts with NOP53; the interaction is direct and competitive with MYC. Interacts with LRRC34. Interacts with RRP1B. Interacts with NPM3. Interacts with ALKBH2. Interacts with TTF1 (via C-terminal region). Interacts with NOP2. Interacts with ARID3C (via REKLES DOMAIN); the interaction mediates ARID3C nuclear shuttling. Post-translationally, acetylated at C-terminal lysine residues, thereby increasing affinity to histones. ADP-ribosylated. In terms of processing, phosphorylated at Ser-4 by PLK1 and PLK2. Phosphorylation at Ser-4 by PLK2 in S phase is required for centriole duplication and is sufficient to trigger centriole replication. Phosphorylation at Ser-4 by PLK1 takes place during mitosis. Phosphorylated by CDK2 at Ser-125 and Thr-200. Phosphorylation at Thr-200 may trigger initiation of centrosome duplication. Phosphorylated by CDK1 at Thr-200, Thr-219, Thr-234 and Thr-237 during cell mitosis. When these four sites are phosphorated, RNA-binding activity seem to be abolished. May be phosphorylated at Ser-70 by NEK2. The Thr-200 phosphorylated form has higher affinity for ROCK2. Post-translationally, sumoylated by ARF. May be ubiquitinated. Ubiquitination leads to proteasomal degradation. Deubiquitinated by USP36.

It is found in the nucleus. The protein localises to the nucleolus. The protein resides in the nucleoplasm. It localises to the cytoplasm. Its subcellular location is the cytoskeleton. It is found in the microtubule organizing center. The protein localises to the centrosome. Functionally, involved in diverse cellular processes such as ribosome biogenesis, centrosome duplication, protein chaperoning, histone assembly, cell proliferation, and regulation of tumor suppressors p53/TP53 and ARF. Binds ribosome presumably to drive ribosome nuclear export. Associated with nucleolar ribonucleoprotein structures and bind single-stranded nucleic acids. Acts as a chaperonin for the core histones H3, H2B and H4. Stimulates APEX1 endonuclease activity on apurinic/apyrimidinic (AP) double-stranded DNA but inhibits APEX1 endonuclease activity on AP single-stranded RNA. May exert a control of APEX1 endonuclease activity within nucleoli devoted to repair AP on rDNA and the removal of oxidized rRNA molecules. In concert with BRCA2, regulates centrosome duplication. Regulates centriole duplication: phosphorylation by PLK2 is able to trigger centriole replication. Negatively regulates the activation of EIF2AK2/PKR and suppresses apoptosis through inhibition of EIF2AK2/PKR autophosphorylation. Antagonizes the inhibitory effect of ATF5 on cell proliferation and relieves ATF5-induced G2/M blockade. In complex with MYC enhances the transcription of MYC target genes. May act as chaperonin or cotransporter in the nucleolar localization of transcription termination factor TTF1. The chain is Nucleophosmin (NPM1) from Bos taurus (Bovine).